We begin with the raw amino-acid sequence, 247 residues long: Probable transcriptional regulatory protein PC1_1817 (247 aa).

Belongs to the TACO1 family.

It is found in the cytoplasm. This chain is Probable transcriptional regulatory protein PC1_1817, found in Pectobacterium carotovorum subsp. carotovorum (strain PC1).